The chain runs to 64 residues: uncharacterized protein (64 aa).

The first 26 residues, 1 to 26, serve as a signal peptide directing secretion; it reads MVVKENFCGACLTIPLAFAGAGTAIG. Residues 33–53 traverse the membrane as a helical segment; it reads IKKWSIVITIISLLLTVWFIY.

The protein belongs to the IIV-6 010R family.

It is found in the host membrane. This is an uncharacterized protein from Aedes vexans (Inland floodwater mosquito).